The sequence spans 193 residues: PXMP2/4 family protein 2 (193 aa).

Helical transmembrane passes span 56–78, 96–116, 132–152, and 160–180; these read VATM…YRSL, IDQL…TNFI, LFYA…INFS, and VLYS…ISFD.

This sequence belongs to the peroxisomal membrane protein PXMP2/4 family.

The protein localises to the membrane. The polypeptide is PXMP2/4 family protein 2 (Dictyostelium discoideum (Social amoeba)).